The chain runs to 207 residues: LexA repressor (207 aa).

The segment at residues 28-47 is a DNA-binding region (H-T-H motif); the sequence is VREIARRFRITPRGAQLHLV. Catalysis depends on for autocatalytic cleavage activity residues Ser119 and Lys156.

It belongs to the peptidase S24 family. Homodimer.

It carries out the reaction Hydrolysis of Ala-|-Gly bond in repressor LexA.. Represses a number of genes involved in the response to DNA damage (SOS response), including recA and lexA. In the presence of single-stranded DNA, RecA interacts with LexA causing an autocatalytic cleavage which disrupts the DNA-binding part of LexA, leading to derepression of the SOS regulon and eventually DNA repair. In Thermotoga neapolitana (strain ATCC 49049 / DSM 4359 / NBRC 107923 / NS-E), this protein is LexA repressor.